Reading from the N-terminus, the 88-residue chain is UPF0297 protein SSU98_0066 (88 aa).

It belongs to the UPF0297 family.

This chain is UPF0297 protein SSU98_0066, found in Streptococcus suis (strain 98HAH33).